The following is a 127-amino-acid chain: Large ribosomal subunit protein bL12 (127 aa).

The segment at 96–127 is disordered; the sequence is GTPSTLKEAVSKDDAEEAAKQLKEAGAEVEVK. Residues 104–127 show a composition bias toward basic and acidic residues; the sequence is AVSKDDAEEAAKQLKEAGAEVEVK.

This sequence belongs to the bacterial ribosomal protein bL12 family. In terms of assembly, homodimer. Part of the ribosomal stalk of the 50S ribosomal subunit. Forms a multimeric L10(L12)X complex, where L10 forms an elongated spine to which 2 to 4 L12 dimers bind in a sequential fashion. Binds GTP-bound translation factors.

Forms part of the ribosomal stalk which helps the ribosome interact with GTP-bound translation factors. Is thus essential for accurate translation. The polypeptide is Large ribosomal subunit protein bL12 (Oleidesulfovibrio alaskensis (strain ATCC BAA-1058 / DSM 17464 / G20) (Desulfovibrio alaskensis)).